The sequence spans 82 residues: Small ribosomal subunit protein eS21z (82 aa).

An N-acetylmethionine modification is found at M1.

Belongs to the eukaryotic ribosomal protein eS21 family.

This Arabidopsis thaliana (Mouse-ear cress) protein is Small ribosomal subunit protein eS21z (RPS21B).